We begin with the raw amino-acid sequence, 910 residues long: Lysine-specific demethylase 7 homolog (910 aa).

Over residues 1–11 the composition is skewed to polar residues; that stretch reads MDGNDINIQKN. Disordered stretches follow at residues 1-58, 103-162, and 183-212; these read MDGN…HQTP, NKMG…GSEP, and QEEL…DRCG. Positions 25 to 35 are enriched in basic and acidic residues; it reads QHSDHKNHESA. The span at 43-58 shows a compositional bias: polar residues; it reads YTASQPALSSTEHQTP. Residues 118–130 are compositionally biased toward basic and acidic residues; sequence PKSEPKIEPHVTD. Polar residues predominate over residues 150–160; it reads ESNQNYVSNGS. Residues 200 to 210 show a composition bias toward basic and acidic residues; the sequence is PEQKTPKESDR. The PHD-type zinc-finger motif lies at 208–290; that stretch reads SDRCGGCGKF…KFFCPKCVPH (83 aa). The JmjC domain occupies 441–612; it reads SDNNEMKEIA…MQMRVYHLEN (172 aa). Residues 505–510, Tyr-518, Lys-525, and His-580 contribute to the substrate site; that span reads TDFHVD. Positions 508 and 510 each coordinate Fe cation. His-580 contributes to the Fe cation binding site. Disordered stretches follow at residues 712-790 and 864-910; these read KIQN…PSEV and EAVH…KLKM. Residues 748–757 show a composition bias toward basic residues; that stretch reads YKKKYTKKAK. Residues 758–780 show a composition bias toward basic and acidic residues; sequence KDNDDAPKVKKAKKEEVPEEKVP.

Belongs to the JHDM1 histone demethylase family. JHDM1D subfamily. Requires Fe(2+) as cofactor. In terms of tissue distribution, mainly expressed in neurons. Also weakly expressed in some muscle, intestinal and hypodermal cells.

Its subcellular location is the nucleus. With respect to regulation, competitively inhibited by 2-hydroxyglutarate. Its function is as follows. Histone demethylase required for nervous system development. Specifically demethylates dimethylated 'Lys-9', 'Lys-23' and 'Lys-27' (H3K9me2, H3K23me2 and H3K27me2, respectively) of histone H3, thereby playing a central role in histone code. Promotes mitochondrial stress-induced longevity. The chain is Lysine-specific demethylase 7 homolog (jmjd-1.2) from Caenorhabditis elegans.